Here is an 84-residue protein sequence, read N- to C-terminus: Large ribosomal subunit protein bL27 (84 aa).

The disordered stretch occupies residues 1–27 (MAHKKGQGASRNGRDSKSKRLGVKVGA).

Belongs to the bacterial ribosomal protein bL27 family.

The polypeptide is Large ribosomal subunit protein bL27 (Chlamydia pneumoniae (Chlamydophila pneumoniae)).